The chain runs to 342 residues: Phenylalanine--tRNA ligase alpha subunit (342 aa).

Mg(2+) is bound at residue E257.

This sequence belongs to the class-II aminoacyl-tRNA synthetase family. Phe-tRNA synthetase alpha subunit type 1 subfamily. As to quaternary structure, tetramer of two alpha and two beta subunits. The cofactor is Mg(2+).

It localises to the cytoplasm. The catalysed reaction is tRNA(Phe) + L-phenylalanine + ATP = L-phenylalanyl-tRNA(Phe) + AMP + diphosphate + H(+). The polypeptide is Phenylalanine--tRNA ligase alpha subunit (Chlamydia trachomatis serovar A (strain ATCC VR-571B / DSM 19440 / HAR-13)).